A 753-amino-acid polypeptide reads, in one-letter code: MTILNHTLGFPRVGLRRELKKAQESYWAGNSTREELLAVGRELRARHWDQQKQAGIDLLPVGDFAWYDHVLTTSLLLGNVPARHQNKDGSVDIDTLFRIGRGRAPTGEPAAAAEMTKWFNTNYHYMVPEFVKGQQFKLTWTQLLEEVDEALALGHKVKPVLLGPVTYLWLGKVKGEQFDRLSLLNDILPVYQQVLAELAKRGIEWVQIDEPALVLELPQAWLDAYKPAYDALQGQVKLLLTTYFEGVTPNLDTITALPVQGLHVDLVHGKDDVAELHKRLPSDWLLSAGLINGRNVWRADLTEKYAQIKDIVGKRDLWVASSCSLLHSPIDLSVETRLDAEVKSWFAFALQKCHELALLRDALNSGDTAALAEWSAPIQARRHSTRVHNPAVEKRLAAITAQDSQRANVYEVRAEAQRARFKLPAWPTTTIGSFPQTTEIRTLRLDFKKGNLDANNYRTGIAEHIKQAIVEQERLGLDVLVHGEAERNDMVEYFGEHLDGFVFTQNGWVQSYGSRCVKPPIVIGDVSRPAPITVEWAKYAQSLTDKPVKGMLTGPVTILCWSFPREDVSRETIAKQIALALRDEVADLEAAGIGIIQIDEPALREGLPLRRSDWDAYLQWGVEAFRINAAVAKDDTQIHTHMCYCEFNDIMDSIAALDADVITIETSRSDMELLESFEEFDYPNEIGPGVYDIHSPNVPSVEWIEALLKKAAKRIPAERLWVNPDCGLKTRGWPETRAALANMVQAAQNLRRG.

5-methyltetrahydropteroyltri-L-glutamate is bound by residues 17-20 (RELK) and K117. L-homocysteine-binding positions include 431–433 (IGS) and E484. Residues 431–433 (IGS) and E484 each bind L-methionine. 5-methyltetrahydropteroyltri-L-glutamate contacts are provided by residues 515 to 516 (RC) and W561. D599 contributes to the L-homocysteine binding site. Position 599 (D599) interacts with L-methionine. A 5-methyltetrahydropteroyltri-L-glutamate-binding site is contributed by E605. Zn(2+)-binding residues include H641, C643, and E665. Residue H694 is the Proton donor of the active site. Zn(2+) is bound at residue C726.

It belongs to the vitamin-B12 independent methionine synthase family. Zn(2+) serves as cofactor.

It catalyses the reaction 5-methyltetrahydropteroyltri-L-glutamate + L-homocysteine = tetrahydropteroyltri-L-glutamate + L-methionine. Its pathway is amino-acid biosynthesis; L-methionine biosynthesis via de novo pathway; L-methionine from L-homocysteine (MetE route): step 1/1. Functionally, catalyzes the transfer of a methyl group from 5-methyltetrahydrofolate to homocysteine resulting in methionine formation. This Escherichia fergusonii (strain ATCC 35469 / DSM 13698 / CCUG 18766 / IAM 14443 / JCM 21226 / LMG 7866 / NBRC 102419 / NCTC 12128 / CDC 0568-73) protein is 5-methyltetrahydropteroyltriglutamate--homocysteine methyltransferase.